A 235-amino-acid chain; its full sequence is LexA repressor (235 aa).

The segment at residues 26-46 (FDEMKDALDLKSKSGIHRLIT) is a DNA-binding region (H-T-H motif). Catalysis depends on for autocatalytic cleavage activity residues S156 and K194.

Belongs to the peptidase S24 family. Homodimer.

The catalysed reaction is Hydrolysis of Ala-|-Gly bond in repressor LexA.. Functionally, represses a number of genes involved in the response to DNA damage (SOS response), including recA and lexA. In the presence of single-stranded DNA, RecA interacts with LexA causing an autocatalytic cleavage which disrupts the DNA-binding part of LexA, leading to derepression of the SOS regulon and eventually DNA repair. This is LexA repressor from Paramagnetospirillum magneticum (strain ATCC 700264 / AMB-1) (Magnetospirillum magneticum).